The chain runs to 621 residues: Chaperone protein HtpG (621 aa).

The tract at residues 1–328 (MTQEKKKFDA…SEDLPLNISR (328 aa)) is a; substrate-binding. Residues 329-544 (ESLQHNSVLE…DSAMDIRMER (216 aa)) form a b region. Residues 475–495 (SDIDVEQTTSQSEDKNTHSKK) form a disordered region. A compositionally biased stretch (basic and acidic residues) spans 486 to 495 (SEDKNTHSKK). A c region spans residues 545-621 (FLIEQKQITA…LNDIVQKAIL (77 aa)).

It belongs to the heat shock protein 90 family. Homodimer.

The protein localises to the cytoplasm. Functionally, molecular chaperone. Has ATPase activity. The sequence is that of Chaperone protein HtpG from Rickettsia akari (strain Hartford).